The following is a 375-amino-acid chain: Dihydroorotate dehydrogenase (quinone) (375 aa).

FMN-binding positions include 78-82 (AGLDK) and Thr-102. Substrate is bound at residue Lys-82. Position 127–131 (127–131 (NRMGF)) interacts with substrate. FMN-binding residues include Asn-159 and Asn-192. Substrate is bound at residue Asn-192. The active-site Nucleophile is the Ser-195. Residue Asn-197 participates in substrate binding. FMN-binding residues include Lys-230 and Thr-258. 259–260 (NT) is a binding site for substrate. FMN is bound by residues Gly-288, Gly-317, and 338-339 (YT).

This sequence belongs to the dihydroorotate dehydrogenase family. Type 2 subfamily. Monomer. FMN is required as a cofactor.

It is found in the cell membrane. The enzyme catalyses (S)-dihydroorotate + a quinone = orotate + a quinol. It functions in the pathway pyrimidine metabolism; UMP biosynthesis via de novo pathway; orotate from (S)-dihydroorotate (quinone route): step 1/1. Functionally, catalyzes the conversion of dihydroorotate to orotate with quinone as electron acceptor. This chain is Dihydroorotate dehydrogenase (quinone), found in Cyanothece sp. (strain PCC 7425 / ATCC 29141).